Here is a 356-residue protein sequence, read N- to C-terminus: Dihydroorotate dehydrogenase (quinone) (356 aa).

FMN is bound by residues 67-71 (AGFDK) and threonine 91. Lysine 71 is a binding site for substrate. Position 116–120 (116–120 (NRMGF)) interacts with substrate. FMN is bound by residues asparagine 153 and asparagine 186. Asparagine 186 serves as a coordination point for substrate. Catalysis depends on serine 189, which acts as the Nucleophile. Asparagine 191 lines the substrate pocket. 2 residues coordinate FMN: lysine 228 and threonine 256. 257 to 258 (NT) contacts substrate. Residues glycine 282, glycine 311, and 332–333 (YT) each bind FMN.

This sequence belongs to the dihydroorotate dehydrogenase family. Type 2 subfamily. In terms of assembly, monomer. It depends on FMN as a cofactor.

The protein resides in the cell membrane. The catalysed reaction is (S)-dihydroorotate + a quinone = orotate + a quinol. It participates in pyrimidine metabolism; UMP biosynthesis via de novo pathway; orotate from (S)-dihydroorotate (quinone route): step 1/1. Catalyzes the conversion of dihydroorotate to orotate with quinone as electron acceptor. This Pseudarthrobacter chlorophenolicus (strain ATCC 700700 / DSM 12829 / CIP 107037 / JCM 12360 / KCTC 9906 / NCIMB 13794 / A6) (Arthrobacter chlorophenolicus) protein is Dihydroorotate dehydrogenase (quinone).